The primary structure comprises 404 residues: Histidinol dehydrogenase (404 aa).

NAD(+) contacts are provided by tyrosine 114, glutamine 176, and asparagine 199. The substrate site is built by serine 222, glutamine 244, and histidine 247. Positions 244 and 247 each coordinate Zn(2+). Active-site proton acceptor residues include glutamate 300 and histidine 301. Residues histidine 301, aspartate 334, glutamate 388, and histidine 393 each coordinate substrate. Aspartate 334 is a Zn(2+) binding site. Histidine 393 lines the Zn(2+) pocket.

This sequence belongs to the histidinol dehydrogenase family. Zn(2+) serves as cofactor.

It carries out the reaction L-histidinol + 2 NAD(+) + H2O = L-histidine + 2 NADH + 3 H(+). The protein operates within amino-acid biosynthesis; L-histidine biosynthesis; L-histidine from 5-phospho-alpha-D-ribose 1-diphosphate: step 9/9. In terms of biological role, catalyzes the sequential NAD-dependent oxidations of L-histidinol to L-histidinaldehyde and then to L-histidine. In Archaeoglobus fulgidus (strain ATCC 49558 / DSM 4304 / JCM 9628 / NBRC 100126 / VC-16), this protein is Histidinol dehydrogenase (hisD).